A 131-amino-acid polypeptide reads, in one-letter code: uncharacterized protein (131 aa).

This is an uncharacterized protein from Acanthamoeba polyphaga (Amoeba).